The chain runs to 90 residues: Probable small nuclear ribonucleoprotein E (90 aa).

A Sm domain is found at 14–89 (VNLIFRYLQN…ITLIHAAAQE (76 aa)).

It belongs to the snRNP Sm proteins family. In terms of assembly, core component of the spliceosomal U1, U2, U4 and U5 small nuclear ribonucleoproteins (snRNPs), the building blocks of the spliceosome.

It is found in the nucleus. The protein resides in the cytoplasm. It localises to the cytosol. In terms of biological role, plays a role in pre-mRNA splicing as a core component of the spliceosomal U1, U2, U4 and U5 small nuclear ribonucleoproteins (snRNPs), the building blocks of the spliceosome. The chain is Probable small nuclear ribonucleoprotein E (snr-6) from Caenorhabditis briggsae.